The following is a 336-amino-acid chain: UDP-galactose transporter 1 (336 aa).

9 consecutive transmembrane segments (helical) span residues 11–31 (LAIL…KWIF), 38–58 (FPLS…YIVI), 83–103 (FVFC…PVSF), 131–151 (IWAS…TELS), 154–174 (MFGF…TILA), 193–213 (APFA…SGIL), 227–247 (IIIL…FYVI), 254–274 (TFNV…WLIF), and 278–298 (ISYM…FYGY).

It belongs to the TPT transporter family. TPT (TC 2.A.7.9) subfamily.

Its subcellular location is the membrane. In terms of biological role, nucleotide sugar transporter that specifically transports UDP-galactose. In Arabidopsis thaliana (Mouse-ear cress), this protein is UDP-galactose transporter 1.